Here is a 308-residue protein sequence, read N- to C-terminus: MKITTIAKTSLALGLLTTGVITTTTQAANATTLSSTKVEAPQSTPPSTKIEAPQSKPNATTPPSTKVEAPQQTANATTPPSTKVTTPPSTNTPQPMQSTKSDTPQSPTTKQVPTEINPKFKDLRAYYTKPSLEFKNEIGIILKKWTTIRFMNVVPDYFIYKIALVGKDDKKYGEGVHRNVDVFVVLEENNYNLEKYSVGGITKSNSKKVDHKAGVRITKEDNKGTISHDVSEFKITKEQISLKELDFKLRKQLIEKNNLYGNVGSGKIVIKMKNGGKYTFELHKKLQENRMADVIDGTNIDNIEVNIK.

A signal peptide spans 1–30 (MKITTIAKTSLALGLLTTGVITTTTQAANA). Residues 32-117 (TLSSTKVEAP…TTKQVPTEIN (86 aa)) are disordered. Composition is skewed to polar residues over residues 33 to 47 (LSSTKVEAPQSTPPS) and 55 to 76 (SKPNATTPPSTKVEAPQQTANA). The span at 77–93 (TTPPSTKVTTPPSTNTP) shows a compositional bias: low complexity. The segment covering 94 to 114 (QPMQSTKSDTPQSPTTKQVPT) has biased composition (polar residues). The sialyl Lewis X-binding stretch occupies residues 180–278 (VDVFVVLEEN…VIKMKNGGKY (99 aa)).

The protein belongs to the staphylococcal/streptococcal toxin family.

It is found in the secreted. Its function is as follows. Secreted protein that plays a role in immune innate response inhibition by interfering with host TLR2-mediated pathway. This Staphylococcus aureus (strain NCTC 8325 / PS 47) protein is Staphylococcal superantigen-like 4.